The following is a 501-amino-acid chain: Myrosinase MA1 (501 aa).

Cystine bridges form between Cys6–Cys438, Cys14–Cys434, and Cys206–Cys214. The N-linked (GlcNAc...) asparagine glycan is linked to Asn21. Residue Gln39 participates in substrate binding. His56 is a Zn(2+) binding site. N-linked (GlcNAc...) asparagine glycosylation occurs at Asn60. Asp70 contacts Zn(2+). A glycan (N-linked (GlcNAc...) asparagine) is linked at Asn90. Substrate-binding residues include His141 and Asn186. L-ascorbate is bound at residue Gln187. Asn218 and Asn244 each carry an N-linked (GlcNAc...) asparagine glycan. Arg259 provides a ligand contact to L-ascorbate. N-linked (GlcNAc...) asparagine glycosylation is found at Asn265 and Asn292. Tyr330 serves as a coordination point for substrate. Residues Asn343, Asn346, and Asn361 are each glycosylated (N-linked (GlcNAc...) asparagine). The active-site Nucleophile is the Glu409. Residues Trp457 and 464–465 (EF) each bind substrate. Residue Asn482 is glycosylated (N-linked (GlcNAc...) asparagine).

Belongs to the glycosyl hydrolase 1 family. In terms of assembly, homodimer. In vacuoles called myrosin grains of a certain class of cells, myrosin cells, distributed in the cotyledons and the axis of the embryo as well as in different organs of the growing plant.

The protein resides in the vacuole. It carries out the reaction a thioglucoside + H2O = a sugar + a thiol.. Degradation of glucosinolates (glucose residue linked by a thioglucoside bound to an amino acid derivative) to glucose, sulfate and any of the products: thiocyanates, isothiocyanates, nitriles, epithionitriles or oxazolidine-2-thiones. This chain is Myrosinase MA1, found in Sinapis alba (White mustard).